The following is a 583-amino-acid chain: Kelch-like protein 38 (583 aa).

In terms of domain architecture, BTB spans 34–101 (TDVILCTEDK…IYTGSITITM (68 aa)). The 102-residue stretch at 136–237 (CLSMIRLSEI…HPTYLFQFIA (102 aa)) folds into the BACK domain. Kelch repeat units follow at residues 285–332 (TLVV…CIHS), 333–385 (ILYV…SYLH), 386–433 (FIFA…ANDQ), 435–481 (IYVF…VIED), 482–523 (KIYI…VINN), and 525–575 (LYVT…PLIC).

In Danio rerio (Zebrafish), this protein is Kelch-like protein 38 (klhl38).